A 68-amino-acid chain; its full sequence is Glu S.griseus protease inhibitor (68 aa).

An N-acetylserine modification is found at serine 1. Cysteine 3 and cysteine 48 form a disulfide bridge.

The protein belongs to the protease inhibitor I13 (potato type I serine protease inhibitor) family.

Its function is as follows. Competitively inhibits Glu S.griseus protease by forming probably a 1:1 complex. BGIA has no inhibitory activity against 2 other acidic amino acid-specific endopeptidases (S.aureus protease V8 and B.subtilis proteinase), chymotrypsin, trypsin, pancreatic elastase, and papain, although subtilisin Carlsberg was strongly inhibited. The protein is Glu S.griseus protease inhibitor of Momordica charantia (Bitter gourd).